The sequence spans 295 residues: uncharacterized protein (295 aa).

Residues 1–58 (MESGDLRVFQMVAREGTITKAALQLGYVQSNVTARIQQLEAELGTTLFLRHNRGMTLS) form the HTH lysR-type domain. A DNA-binding region (H-T-H motif) is located at residues 18–37 (ITKAALQLGYVQSNVTARIQ).

It belongs to the LysR transcriptional regulatory family.

This is an uncharacterized protein from Bacillus subtilis (strain 168).